The primary structure comprises 302 residues: Methionyl-tRNA formyltransferase (302 aa).

108–111 (SLLP) serves as a coordination point for (6S)-5,6,7,8-tetrahydrofolate. Residues 276 to 288 (REGKRPMEPEEFL) show a composition bias toward basic and acidic residues. Residues 276 to 302 (REGKRPMEPEEFLRGFPLPEGSRAHTA) form a disordered region.

It belongs to the Fmt family.

The enzyme catalyses L-methionyl-tRNA(fMet) + (6R)-10-formyltetrahydrofolate = N-formyl-L-methionyl-tRNA(fMet) + (6S)-5,6,7,8-tetrahydrofolate + H(+). Attaches a formyl group to the free amino group of methionyl-tRNA(fMet). The formyl group appears to play a dual role in the initiator identity of N-formylmethionyl-tRNA by promoting its recognition by IF2 and preventing the misappropriation of this tRNA by the elongation apparatus. This chain is Methionyl-tRNA formyltransferase, found in Cereibacter sphaeroides (strain ATCC 17029 / ATH 2.4.9) (Rhodobacter sphaeroides).